Consider the following 264-residue polypeptide: Tropinone reductase homolog At5g06060 (264 aa).

Position 15-39 (15-39 (LVTGGTRGIGRAVVEELAKFGAKVH)) interacts with NADP(+). Serine 148 serves as a coordination point for substrate. Tyrosine 161 serves as the catalytic Proton acceptor.

This sequence belongs to the short-chain dehydrogenases/reductases (SDR) family. SDR65C subfamily.

The protein is Tropinone reductase homolog At5g06060 of Arabidopsis thaliana (Mouse-ear cress).